The following is a 156-amino-acid chain: 6,7-dimethyl-8-ribityllumazine synthase (156 aa).

5-amino-6-(D-ribitylamino)uracil-binding positions include Phe-22, 57 to 59, and 81 to 83; these read AVE and CVI. 86–87 contacts (2S)-2-hydroxy-3-oxobutyl phosphate; sequence GT. The Proton donor role is filled by His-89. Phe-114 is a 5-amino-6-(D-ribitylamino)uracil binding site. Arg-128 provides a ligand contact to (2S)-2-hydroxy-3-oxobutyl phosphate.

The protein belongs to the DMRL synthase family. Forms an icosahedral capsid composed of 60 subunits, arranged as a dodecamer of pentamers.

It catalyses the reaction (2S)-2-hydroxy-3-oxobutyl phosphate + 5-amino-6-(D-ribitylamino)uracil = 6,7-dimethyl-8-(1-D-ribityl)lumazine + phosphate + 2 H2O + H(+). Its pathway is cofactor biosynthesis; riboflavin biosynthesis; riboflavin from 2-hydroxy-3-oxobutyl phosphate and 5-amino-6-(D-ribitylamino)uracil: step 1/2. In terms of biological role, catalyzes the formation of 6,7-dimethyl-8-ribityllumazine by condensation of 5-amino-6-(D-ribitylamino)uracil with 3,4-dihydroxy-2-butanone 4-phosphate. This is the penultimate step in the biosynthesis of riboflavin. This Vibrio cholerae serotype O1 (strain ATCC 39315 / El Tor Inaba N16961) protein is 6,7-dimethyl-8-ribityllumazine synthase.